The chain runs to 114 residues: MTPDELARLTGYSRQTINKWVRKEGWTTSPKPGVQGGKARLVHVNEQVREYIRNAERPEGQGEAPALSGDAPLEVLLVTLAKEMTPVEQKQFTSLLLREGIIGLLQRLGIRDSK.

To E.coli YfiI and P.aeruginosa RluD.

This is an uncharacterized protein from Escherichia coli O6:H1 (strain CFT073 / ATCC 700928 / UPEC).